The following is a 500-amino-acid chain: L-arabinose isomerase (500 aa).

Mn(2+)-binding residues include glutamate 306, glutamate 333, histidine 350, and histidine 450.

It belongs to the arabinose isomerase family. In terms of assembly, homohexamer. Mn(2+) is required as a cofactor.

It carries out the reaction beta-L-arabinopyranose = L-ribulose. It participates in carbohydrate degradation; L-arabinose degradation via L-ribulose; D-xylulose 5-phosphate from L-arabinose (bacterial route): step 1/3. Functionally, catalyzes the conversion of L-arabinose to L-ribulose. The sequence is that of L-arabinose isomerase from Escherichia coli O157:H7.